The primary structure comprises 316 residues: 2-phospho-L-lactate guanylyltransferase (316 aa).

A compositionally biased stretch (low complexity) spans 72–85 (TGVSTEAVSTSTST). Disordered stretches follow at residues 72–107 (TGVS…PTHT) and 119–138 (LRDD…DGDK). Residues 92–107 (HNAASDNYVSQSPTHT) are compositionally biased toward polar residues.

This sequence belongs to the CofC family. Homodimer.

The catalysed reaction is (2S)-2-phospholactate + GTP + H(+) = (2S)-lactyl-2-diphospho-5'-guanosine + diphosphate. It functions in the pathway cofactor biosynthesis; coenzyme F420 biosynthesis. Its function is as follows. Guanylyltransferase that catalyzes the activation of (2S)-2-phospholactate (2-PL) as (2S)-lactyl-2-diphospho-5'-guanosine, via the condensation of 2-PL with GTP. It is involved in the biosynthesis of coenzyme F420, a hydride carrier cofactor. In Haloquadratum walsbyi (strain DSM 16790 / HBSQ001), this protein is 2-phospho-L-lactate guanylyltransferase.